Consider the following 185-residue polypeptide: Urease accessory protein UreE (185 aa).

The disordered stretch occupies residues Leu-153 to His-185. Residues Gly-162–His-175 show a composition bias toward basic residues. Positions His-176–His-185 are enriched in basic and acidic residues.

The protein belongs to the UreE family.

The protein resides in the cytoplasm. Functionally, involved in urease metallocenter assembly. Binds nickel. Probably functions as a nickel donor during metallocenter assembly. In Haemophilus influenzae (strain 86-028NP), this protein is Urease accessory protein UreE.